Reading from the N-terminus, the 422-residue chain is MLLIKNGRVVDPKSGLDTQADVLVDGKKVVKIAENIDAGDAQVIDATGLVVAPGLVDIHVHFREPGQTHKEDIHTGALAAAAGGFTTVVMMANTNPTISDKETLKEVLTSAAKENIHIKSVATITKNFDGENITDFKGLLEAGAVGFSDDGIPLTNAGIVKKAMELAKENNTFISLHEEDPDLNGVLGFNENIAKKEFHICGATGVAEYSMIARDVMVAYDTQAHVHIQHLSKAESVKVVEFAQKLGAQVTAEVAPQHFSKTEDLLLSKGANAKMNPPLRLESDRQAVIEGLKSGVISVIATDHAPHHADEKNVADVTKAPSGMTGLETSLSLGLTYLVEAGHLSLTELLKLMTSNPSDLYGFDAGYLAENGPADLVIFADKEKRQVTADFKSKAANSPFVGEELTGSVKYTICDGEIVYQV.

Residues H59 and H61 each coordinate Zn(2+). Substrate contacts are provided by residues 61–63 and N93; that span reads HFR. Zn(2+) is bound by residues D150, H177, and H230. N276 contributes to the substrate binding site. D303 lines the Zn(2+) pocket. D303 is a catalytic residue. Residue H307 coordinates substrate.

The protein belongs to the metallo-dependent hydrolases superfamily. DHOase family. Class I DHOase subfamily. It depends on Zn(2+) as a cofactor.

It catalyses the reaction (S)-dihydroorotate + H2O = N-carbamoyl-L-aspartate + H(+). It participates in pyrimidine metabolism; UMP biosynthesis via de novo pathway; (S)-dihydroorotate from bicarbonate: step 3/3. Its function is as follows. Catalyzes the reversible cyclization of carbamoyl aspartate to dihydroorotate. This Streptococcus thermophilus (strain CNRZ 1066) protein is Dihydroorotase.